The primary structure comprises 314 residues: Short chain dehydrogenase atnD (314 aa).

4 residues coordinate NADP(+): leucine 41, lysine 66, aspartate 90, and asparagine 116. Residues serine 171 and tyrosine 204 each act as proton donor in the active site. NADP(+)-binding residues include tyrosine 204 and lysine 208. The active-site Lowers pKa of active site Tyr is the lysine 208.

Belongs to the short-chain dehydrogenases/reductases (SDR) family.

It participates in secondary metabolite biosynthesis. Short chain dehydrogenase; part of the gene cluster that mediates the biosynthesis of aspercryptins, linear lipopeptides built from six amino acids including 2 highly unusual and nonproteogenic amino acids, 2-amino-octanoic acid (2aoa) and 2-amino-dodecanol (2adol). The core structure of aspercryptins is as follows: Ser/Ala-Thr-Ile/Val-2aoa-Asn-2adol. The first step of aspercryptin biosynthesis is the generation of the fatty acid precursors, octanoic and dodecanoic acids, by the FAS subunits atnF and atnM. The fatty acid precursors are likely transformed into the corresponding alpha-amino fatty acids in three steps. First, they are hydroxylated by the cytochrome P450 monooxygenase atnE, then oxidized to the corresponding alpha-keto acids by the NAD(P)-dependent oxidoreductase atnD, and finally converted to the alpha-amino fatty acids by the PLP-dependent aminotransferases atnH or atnJ. the alpha-amino fatty acids, 2-amino-octanoic and 2-amino-dodecanoic acids, are recognized, activated, and covalently tethered to the NRPS atnA by its fourth and sixth adenylation domains. The second module of atnA is the Thr module and contains an epimerase (E) domain responsible for the epimerization of Thr to D-allo-Thr. Additionally, despite atnA having only one epimerase domain, the first amino acid of aspercryptin A1 is D-Ser, suggesting that serine is either loaded directly as D-Ser on the first module or that the epimerase domain in the threonine module epimerizes both L-Ser and L-Thr. After condensation of the hexapeptide of aspercryptin, the C-terminal reductase (TE) domain might be involved in the reductive release and production of the aldehyde hexapeptide. Further reduction would generate aspercryptins. The variety of aspercryptins produced reflects the flexibility of the atnA NRPS, allowing incorporation of alanine instead of serine, valine for isoleucine, and a C10 fatty amino alcohol instead of the C12 version. AtnB seems to be involved in the selectivity for Ile versus Val by the third module. Moreover, type B, C and D aspercryptins have an additional N-terminal cichorine, acetyl and propionyl group respectively. The protein is Short chain dehydrogenase atnD of Emericella nidulans (strain FGSC A4 / ATCC 38163 / CBS 112.46 / NRRL 194 / M139) (Aspergillus nidulans).